Reading from the N-terminus, the 998-residue chain is Bifunctional glutamine synthetase adenylyltransferase/adenylyl-removing enzyme (998 aa).

Positions 1-487 (MVVTKPATQR…LHAKLFYQPL (487 aa)) are adenylyl removase. An adenylyl transferase region spans residues 492–998 (GPAGLEIRHG…KAVVCKVFGS (507 aa)).

Belongs to the GlnE family. Mg(2+) serves as cofactor.

The enzyme catalyses [glutamine synthetase]-O(4)-(5'-adenylyl)-L-tyrosine + phosphate = [glutamine synthetase]-L-tyrosine + ADP. The catalysed reaction is [glutamine synthetase]-L-tyrosine + ATP = [glutamine synthetase]-O(4)-(5'-adenylyl)-L-tyrosine + diphosphate. In terms of biological role, involved in the regulation of glutamine synthetase GlnA, a key enzyme in the process to assimilate ammonia. When cellular nitrogen levels are high, the C-terminal adenylyl transferase (AT) inactivates GlnA by covalent transfer of an adenylyl group from ATP to specific tyrosine residue of GlnA, thus reducing its activity. Conversely, when nitrogen levels are low, the N-terminal adenylyl removase (AR) activates GlnA by removing the adenylyl group by phosphorolysis, increasing its activity. The regulatory region of GlnE binds the signal transduction protein PII (GlnB) which indicates the nitrogen status of the cell. This is Bifunctional glutamine synthetase adenylyltransferase/adenylyl-removing enzyme from Mycolicibacterium paratuberculosis (strain ATCC BAA-968 / K-10) (Mycobacterium paratuberculosis).